Reading from the N-terminus, the 257-residue chain is Probable S-adenosylmethionine-dependent methyltransferase MSMEG_2350/MSMEI_2290 (257 aa).

This sequence belongs to the methyltransferase superfamily.

In terms of biological role, probable S-adenosylmethionine-dependent methyltransferase required for the 6-O-methylation of the polysaccharide backbone of 6-O-methylglucosyl lipopolysaccharides (MGLP). The polypeptide is Probable S-adenosylmethionine-dependent methyltransferase MSMEG_2350/MSMEI_2290 (Mycolicibacterium smegmatis (strain ATCC 700084 / mc(2)155) (Mycobacterium smegmatis)).